Reading from the N-terminus, the 87-residue chain is CRISPR-associated endoribonuclease Cas2 (87 aa).

D8 serves as a coordination point for Mg(2+).

This sequence belongs to the CRISPR-associated endoribonuclease Cas2 protein family. In terms of assembly, homodimer, forms a heterotetramer with a Cas1 homodimer. Mg(2+) is required as a cofactor.

Functionally, CRISPR (clustered regularly interspaced short palindromic repeat), is an adaptive immune system that provides protection against mobile genetic elements (viruses, transposable elements and conjugative plasmids). CRISPR clusters contain sequences complementary to antecedent mobile elements and target invading nucleic acids. CRISPR clusters are transcribed and processed into CRISPR RNA (crRNA). Functions as a ssRNA-specific endoribonuclease. Involved in the integration of spacer DNA into the CRISPR cassette. The sequence is that of CRISPR-associated endoribonuclease Cas2 from Frankia alni (strain DSM 45986 / CECT 9034 / ACN14a).